A 363-amino-acid polypeptide reads, in one-letter code: Peptide chain release factor 1 (363 aa).

An N5-methylglutamine modification is found at glutamine 237. Residues 284-296 (EDEKRRSAEESTR) show a composition bias toward basic and acidic residues. Residues 284–305 (EDEKRRSAEESTRRSLVASGDR) are disordered.

It belongs to the prokaryotic/mitochondrial release factor family. Methylated by PrmC. Methylation increases the termination efficiency of RF1.

Its subcellular location is the cytoplasm. Its function is as follows. Peptide chain release factor 1 directs the termination of translation in response to the peptide chain termination codons UAG and UAA. In Shewanella baltica (strain OS185), this protein is Peptide chain release factor 1.